The sequence spans 468 residues: Acetyl-CoA decarbonylase/synthase complex subunit gamma 2 (468 aa).

In terms of domain architecture, 4Fe-4S spans Met-1–Glu-60. [4Fe-4S] cluster-binding residues include Cys-18, Cys-21, Cys-26, and Cys-43.

In terms of assembly, heterodimer of delta and gamma chains. The ACDS complex is made up of alpha, epsilon, beta, gamma and delta chains with a probable stoichiometry of (alpha(2)epsilon(2))(4)-beta(8)-(gamma(1)delta(1))(8). Corrinoid is required as a cofactor. It depends on [4Fe-4S] cluster as a cofactor.

It catalyses the reaction 5,6,7,8-tetrahydrosarcinapterin + methyl-Co(III)-[corrinoid Fe-S protein] = 5-methyltetrahydrosarcinapterin + Co(I)-[corrinoid Fe-S protein] + H(+). Its pathway is one-carbon metabolism; methanogenesis from acetate. In terms of biological role, part of a complex that catalyzes the reversible cleavage of acetyl-CoA, allowing growth on acetate as sole source of carbon and energy. This Methanosarcina thermophila protein is Acetyl-CoA decarbonylase/synthase complex subunit gamma 2.